The sequence spans 482 residues: uncharacterized protein (482 aa).

Positions 12–80 constitute an HTH gntR-type domain; that stretch reads LPKYRQIVHF…MGKGTVVINN (69 aa). A DNA-binding region (H-T-H motif) is located at residues 40–59; sequence QRTLAKDFQVNRSTVITALE. Lysine 325 carries the N6-(pyridoxal phosphate)lysine modification.

The protein in the C-terminal section; belongs to the class-I pyridoxal-phosphate-dependent aminotransferase family. Requires pyridoxal 5'-phosphate as cofactor.

This is an uncharacterized protein from Bacillus subtilis (strain 168).